A 125-amino-acid polypeptide reads, in one-letter code: Small ribosomal subunit protein bS6 (125 aa).

Belongs to the bacterial ribosomal protein bS6 family.

In terms of biological role, binds together with bS18 to 16S ribosomal RNA. This is Small ribosomal subunit protein bS6 from Campylobacter jejuni (strain RM1221).